A 572-amino-acid polypeptide reads, in one-letter code: AAA ATPase forming ring-shaped complexes (572 aa).

Low complexity predominate over residues 1–18 (MTTASQQTSSHSTASSTS). Residues 1 to 30 (MTTASQQTSSHSTASSTSRKGNNNDATPSL) form a disordered region. Residues 42 to 70 (TRNAKLVEMLKASRDKLDALNEQIRALSD) adopt a coiled-coil conformation. 258–263 (GCGKTL) contributes to the ATP binding site. Positions 543–572 (VAHHNRKTTTETEATEPEGTDSGKGHTDAS) are disordered. A compositionally biased stretch (basic and acidic residues) spans 563–572 (DSGKGHTDAS).

The protein belongs to the AAA ATPase family. Homohexamer. Assembles into a hexameric ring structure.

The polypeptide is AAA ATPase forming ring-shaped complexes (Corynebacterium kroppenstedtii (strain DSM 44385 / JCM 11950 / CIP 105744 / CCUG 35717)).